Consider the following 175-residue polypeptide: Adenine phosphoribosyltransferase (175 aa).

This sequence belongs to the purine/pyrimidine phosphoribosyltransferase family. In terms of assembly, homodimer.

The protein localises to the cytoplasm. It catalyses the reaction AMP + diphosphate = 5-phospho-alpha-D-ribose 1-diphosphate + adenine. It participates in purine metabolism; AMP biosynthesis via salvage pathway; AMP from adenine: step 1/1. In terms of biological role, catalyzes a salvage reaction resulting in the formation of AMP, that is energically less costly than de novo synthesis. The chain is Adenine phosphoribosyltransferase from Lactobacillus acidophilus (strain ATCC 700396 / NCK56 / N2 / NCFM).